We begin with the raw amino-acid sequence, 121 residues long: Flagellar protein FliT (121 aa).

Residues 1–50 form a required for homodimerization region; sequence MNNAPHLYFAWQQLVEKSQLMLRLATEEQWDELIASEMAYVNAVQEIAHL. The tract at residues 60–98 is fliD binding; the sequence is MQEQLRPMLLLILDNESKVKQLLQIRMDELAKLVGQSSV.

This sequence belongs to the FliT family. As to quaternary structure, homodimer. Interacts with FliD and FlhC.

The protein localises to the cytoplasm. It localises to the cytosol. In terms of biological role, dual-function protein that regulates the transcription of class 2 flagellar operons and that also acts as an export chaperone for the filament-capping protein FliD. As a transcriptional regulator, acts as an anti-FlhDC factor; it directly binds FlhC, thus inhibiting the binding of the FlhC/FlhD complex to class 2 promoters, resulting in decreased expression of class 2 flagellar operons. As a chaperone, effects FliD transition to the membrane by preventing its premature polymerization, and by directing it to the export apparatus. The protein is Flagellar protein FliT of Escherichia coli O6:K15:H31 (strain 536 / UPEC).